Consider the following 360-residue polypeptide: MLTLSDFDFDLPPELIAQTALPERSASRLLEVDNTNPSAPPRLVDRRFAELPACVAPGDLLVFNDTKVLKARFFGRKASGGKIEVLIERVTGERTALAQIRASKSPPPGTTLTLADAFDVTVGERVEPFFTLHFPDDCLVLIERHGRLPLPPYIEHAPDAADETRYQTVFAANPGAVAAPTAGLHFDDAVLTALEARGVERATLTLHVGAGTFQPVRVENLAEHRMHSESYELTDALVEKIAATRARGGRVIAVGTTSMRALEAAARDAQAAGRPLAATRAETDIFITPGYRFRVVDRLVTNFHLPKSTLLMLVSAFAGIETIRAAYRHAIDARYRFFSYGDAMLLTRRDDAAEATHGGA.

It belongs to the QueA family. Monomer.

Its subcellular location is the cytoplasm. The catalysed reaction is 7-aminomethyl-7-carbaguanosine(34) in tRNA + S-adenosyl-L-methionine = epoxyqueuosine(34) in tRNA + adenine + L-methionine + 2 H(+). The protein operates within tRNA modification; tRNA-queuosine biosynthesis. Its function is as follows. Transfers and isomerizes the ribose moiety from AdoMet to the 7-aminomethyl group of 7-deazaguanine (preQ1-tRNA) to give epoxyqueuosine (oQ-tRNA). The sequence is that of S-adenosylmethionine:tRNA ribosyltransferase-isomerase from Burkholderia pseudomallei (strain K96243).